A 33-amino-acid chain; its full sequence is MEALVYTFLLVSTLGIIFFAIFFREPPKVPTKK.

The helical transmembrane segment at 3–23 threads the bilayer; the sequence is ALVYTFLLVSTLGIIFFAIFF.

This sequence belongs to the PsbT family. As to quaternary structure, PSII is composed of 1 copy each of membrane proteins PsbA, PsbB, PsbC, PsbD, PsbE, PsbF, PsbH, PsbI, PsbJ, PsbK, PsbL, PsbM, PsbT, PsbY, PsbZ, Psb30/Ycf12, at least 3 peripheral proteins of the oxygen-evolving complex and a large number of cofactors. It forms dimeric complexes.

It localises to the plastid. It is found in the chloroplast thylakoid membrane. Its function is as follows. Found at the monomer-monomer interface of the photosystem II (PS II) dimer, plays a role in assembly and dimerization of PSII. PSII is a light-driven water plastoquinone oxidoreductase, using light energy to abstract electrons from H(2)O, generating a proton gradient subsequently used for ATP formation. In Asparagus officinalis (Garden asparagus), this protein is Photosystem II reaction center protein T.